Consider the following 102-residue polypeptide: Small ribosomal subunit protein uS10 (102 aa).

This sequence belongs to the universal ribosomal protein uS10 family. As to quaternary structure, part of the 30S ribosomal subunit.

Its function is as follows. Involved in the binding of tRNA to the ribosomes. In Bifidobacterium longum subsp. infantis (strain ATCC 15697 / DSM 20088 / JCM 1222 / NCTC 11817 / S12), this protein is Small ribosomal subunit protein uS10.